Reading from the N-terminus, the 889-residue chain is Alanine--tRNA ligase (889 aa).

The Zn(2+) site is built by histidine 569, histidine 573, cysteine 671, and histidine 675.

This sequence belongs to the class-II aminoacyl-tRNA synthetase family. The cofactor is Zn(2+).

The protein localises to the cytoplasm. It catalyses the reaction tRNA(Ala) + L-alanine + ATP = L-alanyl-tRNA(Ala) + AMP + diphosphate. Functionally, catalyzes the attachment of alanine to tRNA(Ala) in a two-step reaction: alanine is first activated by ATP to form Ala-AMP and then transferred to the acceptor end of tRNA(Ala). Also edits incorrectly charged Ser-tRNA(Ala) and Gly-tRNA(Ala) via its editing domain. This chain is Alanine--tRNA ligase, found in Parasynechococcus marenigrum (strain WH8102).